The primary structure comprises 380 residues: Cytochrome b (380 aa).

The next 4 helical transmembrane spans lie at 34 to 54, 78 to 99, 114 to 134, and 179 to 199; these read FGSLLGICLITQILTGLLLAA, WLIRNLHANGASFFFICIYLHI, WNTGVTLLLTLMATAFVGYVL, and FFALHFLLPFMIAGLTLIHLT. The heme b site is built by His-84 and His-98. The heme b site is built by His-183 and His-197. His-202 contacts a ubiquinone. 4 helical membrane-spanning segments follow: residues 227-247, 289-309, 321-341, and 348-368; these read LKDILGFAIMLLLLTTLALFS, LGGVLALAASVLILFLTPFLH, LSQLLFWLLVANLLILTWVGS, and FIIIGQMASITYFIIILVLFP.

This sequence belongs to the cytochrome b family. In terms of assembly, the cytochrome bc1 complex contains 11 subunits: 3 respiratory subunits (MT-CYB, CYC1 and UQCRFS1), 2 core proteins (UQCRC1 and UQCRC2) and 6 low-molecular weight proteins (UQCRH/QCR6, UQCRB/QCR7, UQCRQ/QCR8, UQCR10/QCR9, UQCR11/QCR10 and a cleavage product of UQCRFS1). This cytochrome bc1 complex then forms a dimer. It depends on heme b as a cofactor.

Its subcellular location is the mitochondrion inner membrane. Component of the ubiquinol-cytochrome c reductase complex (complex III or cytochrome b-c1 complex) that is part of the mitochondrial respiratory chain. The b-c1 complex mediates electron transfer from ubiquinol to cytochrome c. Contributes to the generation of a proton gradient across the mitochondrial membrane that is then used for ATP synthesis. The polypeptide is Cytochrome b (MT-CYB) (Pharomachrus antisianus (Crested quetzal)).